The primary structure comprises 185 residues: Large ribosomal subunit protein eL19 (185 aa).

The disordered stretch occupies residues 152–185 (SDKLTSQQEARRAKNTASRAKRNEKAQIVAKVDV).

Belongs to the eukaryotic ribosomal protein eL19 family.

The protein is Large ribosomal subunit protein eL19 (RPL19) of Tetrahymena thermophila (strain SB210).